Here is a 259-residue protein sequence, read N- to C-terminus: Kynurenine formamidase (259 aa).

The HGGXW signature appears at 34 to 38; sequence HGGAW. The Nucleophile role is filled by Ser103. Catalysis depends on residues Asp196 and His228.

This sequence belongs to the kynurenine formamidase family. As to quaternary structure, homodimer.

It carries out the reaction N-formyl-L-kynurenine + H2O = L-kynurenine + formate + H(+). It participates in amino-acid degradation; L-tryptophan degradation via kynurenine pathway; L-kynurenine from L-tryptophan: step 2/2. Functionally, catalyzes the hydrolysis of N-formyl-L-kynurenine to L-kynurenine, the second step in the kynurenine pathway of tryptophan degradation. Kynurenine may be further oxidized to nicotinic acid, NAD(H) and NADP(H). Required for elimination of toxic metabolites. This is Kynurenine formamidase from Meyerozyma guilliermondii (strain ATCC 6260 / CBS 566 / DSM 6381 / JCM 1539 / NBRC 10279 / NRRL Y-324) (Yeast).